Here is a 499-residue protein sequence, read N- to C-terminus: Lysosomal Pro-X carboxypeptidase (499 aa).

The signal sequence occupies residues 1 to 21 (MGRCSLLLLLLLIAFLTPGAA). Residues 22–47 (NPVSPSLRAPSSLPWSTSFRSRPTIT) constitute a propeptide that is removed on maturation. The N-linked (GlcNAc...) asparagine glycan is linked to Asn103. Ser181 serves as the catalytic Charge relay system. Residues 196 to 337 (HLVVGALASS…QNIFQALNVY (142 aa)) form an SKS domain region. Cystine bridges form between Cys217/Cys375, Cys235/Cys313, Cys266/Cys346, and Cys367/Cys397. Asn234 carries N-linked (GlcNAc...) asparagine glycosylation. 2 N-linked (GlcNAc...) asparagine glycosylation sites follow: Asn339 and Asn348. N-linked (GlcNAc...) asparagine glycosylation occurs at Asn418. Residues Asp433 and His458 each act as charge relay system in the active site.

The protein belongs to the peptidase S28 family. As to quaternary structure, homodimer.

The protein resides in the lysosome. It catalyses the reaction Cleavage of a -Pro-|-Xaa bond to release a C-terminal amino acid.. Functionally, cleaves C-terminal amino acids linked to proline in peptides such as angiotensin II, III and des-Arg9-bradykinin. This cleavage occurs at acidic pH, but enzymatic activity is retained with some substrates at neutral pH. This Bos taurus (Bovine) protein is Lysosomal Pro-X carboxypeptidase (PRCP).